The sequence spans 303 residues: Sulfate adenylyltransferase subunit 2 (303 aa).

The interval 281 to 303 (RQGRVIDHDSSGSMEKKKQEGYF) is disordered.

It belongs to the PAPS reductase family. CysD subfamily. As to quaternary structure, heterodimer composed of CysD, the smaller subunit, and CysN.

It carries out the reaction sulfate + ATP + H(+) = adenosine 5'-phosphosulfate + diphosphate. Its pathway is sulfur metabolism; hydrogen sulfide biosynthesis; sulfite from sulfate: step 1/3. Functionally, with CysN forms the ATP sulfurylase (ATPS) that catalyzes the adenylation of sulfate producing adenosine 5'-phosphosulfate (APS) and diphosphate, the first enzymatic step in sulfur assimilation pathway. APS synthesis involves the formation of a high-energy phosphoric-sulfuric acid anhydride bond driven by GTP hydrolysis by CysN coupled to ATP hydrolysis by CysD. The polypeptide is Sulfate adenylyltransferase subunit 2 (Saccharophagus degradans (strain 2-40 / ATCC 43961 / DSM 17024)).